The following is a 274-amino-acid chain: NAD kinase (274 aa).

D59 (proton acceptor) is an active-site residue. NAD(+) contacts are provided by residues 59-60 (DG), 133-134 (ND), R144, D163, 174-179 (TAYALS), and Q233.

Belongs to the NAD kinase family. Requires a divalent metal cation as cofactor.

The protein localises to the cytoplasm. The catalysed reaction is NAD(+) + ATP = ADP + NADP(+) + H(+). Functionally, involved in the regulation of the intracellular balance of NAD and NADP, and is a key enzyme in the biosynthesis of NADP. Catalyzes specifically the phosphorylation on 2'-hydroxyl of the adenosine moiety of NAD to yield NADP. This is NAD kinase from Aquifex aeolicus (strain VF5).